A 454-amino-acid polypeptide reads, in one-letter code: tRNA-2-methylthio-N(6)-dimethylallyladenosine synthase (454 aa).

The 117-residue stretch at 6–122 (RRYHITTFGC…LQDLLQEVLA (117 aa)) folds into the MTTase N-terminal domain. Residues cysteine 15, cysteine 51, cysteine 85, cysteine 157, cysteine 161, and cysteine 164 each coordinate [4Fe-4S] cluster. A Radical SAM core domain is found at 143 to 380 (RESTVTAWVN…NHLVAIKAAE (238 aa)). The TRAM domain occupies 383 to 447 (QRYLGRIEEV…AFSLTGEPVK (65 aa)).

This sequence belongs to the methylthiotransferase family. MiaB subfamily. In terms of assembly, monomer. Requires [4Fe-4S] cluster as cofactor.

The protein resides in the cytoplasm. The enzyme catalyses N(6)-dimethylallyladenosine(37) in tRNA + (sulfur carrier)-SH + AH2 + 2 S-adenosyl-L-methionine = 2-methylsulfanyl-N(6)-dimethylallyladenosine(37) in tRNA + (sulfur carrier)-H + 5'-deoxyadenosine + L-methionine + A + S-adenosyl-L-homocysteine + 2 H(+). Catalyzes the methylthiolation of N6-(dimethylallyl)adenosine (i(6)A), leading to the formation of 2-methylthio-N6-(dimethylallyl)adenosine (ms(2)i(6)A) at position 37 in tRNAs that read codons beginning with uridine. The chain is tRNA-2-methylthio-N(6)-dimethylallyladenosine synthase from Gloeothece citriformis (strain PCC 7424) (Cyanothece sp. (strain PCC 7424)).